Here is a 202-residue protein sequence, read N- to C-terminus: Dephospho-CoA kinase (202 aa).

The 198-residue stretch at 4–201 (VIGLTGGIAS…QKYLAMSKQN (198 aa)) folds into the DPCK domain. Position 12–17 (12–17 (ASGKTT)) interacts with ATP.

The protein belongs to the CoaE family.

It is found in the cytoplasm. The enzyme catalyses 3'-dephospho-CoA + ATP = ADP + CoA + H(+). Its pathway is cofactor biosynthesis; coenzyme A biosynthesis; CoA from (R)-pantothenate: step 5/5. Functionally, catalyzes the phosphorylation of the 3'-hydroxyl group of dephosphocoenzyme A to form coenzyme A. The sequence is that of Dephospho-CoA kinase from Vibrio vulnificus (strain YJ016).